Here is a 188-residue protein sequence, read N- to C-terminus: Fructose-1-phosphate phosphatase YqaB (188 aa).

The active-site Nucleophile is the aspartate 11. Aspartate 11, aspartate 13, and aspartate 167 together coordinate Mg(2+). 11–13 (DMD) is a substrate binding site.

Belongs to the HAD-like hydrolase superfamily. CbbY/CbbZ/Gph/YieH family. Mg(2+) serves as cofactor. It depends on Mn(2+) as a cofactor. Requires Co(2+) as cofactor. Zn(2+) is required as a cofactor.

Catalyzes strongly the dephosphorylation of fructose-1-phosphate (Fru1P) and slightly the dephosphorylation of 6-phosphogluconate (6P-Glu). It has low beta-phosphoglucomutase activity. This Escherichia coli (strain K12) protein is Fructose-1-phosphate phosphatase YqaB (yqaB).